Reading from the N-terminus, the 382-residue chain is Alkaline serine protease ver112 (382 aa).

The N-terminal stretch at 1–15 (MRLSIIAAVLPLALA) is a signal peptide. Positions 16–102 (APVAEPEIAP…IEQDAIFSIN (87 aa)) are excised as a propeptide. Residues 56–99 (SKIPGIERVYENVLNGFSATLSNEELERLRRDPDVESIEQDAIF) form the Inhibitor I9 domain. In terms of domain architecture, Peptidase S8 spans 111–382 (TWGLTRISHR…VNYLAFNGAT (272 aa)). Intrachain disulfides connect cysteine 138–cysteine 227 and cysteine 282–cysteine 353. Catalysis depends on charge relay system residues aspartate 143, histidine 173, and serine 328.

The protein belongs to the peptidase S8 family.

The protein resides in the secreted. Inhibited by phenylmethylsulfonyl fluoride (PMSF). Serine protease which can degrade the nematode cuticle. This is Alkaline serine protease ver112 from Corniculantispora psalliotae (Lecanicillium psalliotae).